The primary structure comprises 244 residues: 1-(5-phosphoribosyl)-5-[(5-phosphoribosylamino)methylideneamino] imidazole-4-carboxamide isomerase (244 aa).

Asp10 (proton acceptor) is an active-site residue. The active-site Proton donor is Asp132.

Belongs to the HisA/HisF family.

It is found in the cytoplasm. It catalyses the reaction 1-(5-phospho-beta-D-ribosyl)-5-[(5-phospho-beta-D-ribosylamino)methylideneamino]imidazole-4-carboxamide = 5-[(5-phospho-1-deoxy-D-ribulos-1-ylimino)methylamino]-1-(5-phospho-beta-D-ribosyl)imidazole-4-carboxamide. It participates in amino-acid biosynthesis; L-histidine biosynthesis; L-histidine from 5-phospho-alpha-D-ribose 1-diphosphate: step 4/9. This chain is 1-(5-phosphoribosyl)-5-[(5-phosphoribosylamino)methylideneamino] imidazole-4-carboxamide isomerase, found in Xanthomonas euvesicatoria pv. vesicatoria (strain 85-10) (Xanthomonas campestris pv. vesicatoria).